The following is an 89-amino-acid chain: Small ribosomal subunit protein uS15 (89 aa).

Belongs to the universal ribosomal protein uS15 family. Part of the 30S ribosomal subunit. Forms a bridge to the 50S subunit in the 70S ribosome, contacting the 23S rRNA.

One of the primary rRNA binding proteins, it binds directly to 16S rRNA where it helps nucleate assembly of the platform of the 30S subunit by binding and bridging several RNA helices of the 16S rRNA. Functionally, forms an intersubunit bridge (bridge B4) with the 23S rRNA of the 50S subunit in the ribosome. This is Small ribosomal subunit protein uS15 from Acholeplasma laidlawii (strain PG-8A).